A 405-amino-acid chain; its full sequence is Protein NDRG4 (405 aa).

The segment at 352 to 405 (AGAVPSASMTRLARSRTASLTSASSVDGARPRPCTQSESSDGIGQINHTMEVSC) is disordered. Over residues 361–376 (TRLARSRTASLTSASS) the composition is skewed to low complexity. Residues 385–405 (CTQSESSDGIGQINHTMEVSC) are compositionally biased toward polar residues.

The protein belongs to the NDRG family.

The protein localises to the cytoplasm. The protein resides in the cytosol. Functionally, contributes to the maintenance of intracerebral BDNF levels within the normal range. May enhance growth factor-induced ERK1 and ERK2 phosphorylation. May attenuate growth factor-promoted ELK1 phosphorylation in a microtubule-dependent manner. The chain is Protein NDRG4 from Xenopus tropicalis (Western clawed frog).